Reading from the N-terminus, the 132-residue chain is Phosphoribosyl-AMP cyclohydrolase (132 aa).

Asp-76 is a Mg(2+) binding site. Cys-77 provides a ligand contact to Zn(2+). The Mg(2+) site is built by Asp-78 and Asp-80. Residues Cys-93 and Cys-100 each contribute to the Zn(2+) site.

Belongs to the PRA-CH family. Homodimer. Mg(2+) serves as cofactor. Zn(2+) is required as a cofactor.

It is found in the cytoplasm. The catalysed reaction is 1-(5-phospho-beta-D-ribosyl)-5'-AMP + H2O = 1-(5-phospho-beta-D-ribosyl)-5-[(5-phospho-beta-D-ribosylamino)methylideneamino]imidazole-4-carboxamide. It participates in amino-acid biosynthesis; L-histidine biosynthesis; L-histidine from 5-phospho-alpha-D-ribose 1-diphosphate: step 3/9. In terms of biological role, catalyzes the hydrolysis of the adenine ring of phosphoribosyl-AMP. The protein is Phosphoribosyl-AMP cyclohydrolase of Methanobrevibacter smithii (strain ATCC 35061 / DSM 861 / OCM 144 / PS).